The primary structure comprises 273 residues: Karrikin insensitive 2 receptor B (273 aa).

S95 (nucleophile) is an active-site residue. D217 is a catalytic residue.

The protein belongs to the AB hydrolase superfamily. As to expression, expressed in stigma.

The protein localises to the nucleus. Its subcellular location is the cytoplasm. May be involved in plant olfaction during volatile communication. This chain is Karrikin insensitive 2 receptor B, found in Petunia hybrida (Petunia).